Reading from the N-terminus, the 41-residue chain is Photosystem II reaction center protein Y (41 aa).

The chain crosses the membrane as a helical span at residues 5 to 23; it reads VLIVLAPVIIAGSWALFNI.

Belongs to the PsbY family. PSII is composed of 1 copy each of membrane proteins PsbA, PsbB, PsbC, PsbD, PsbE, PsbF, PsbH, PsbI, PsbJ, PsbK, PsbL, PsbM, PsbT, PsbX, PsbY, PsbZ, Psb30/Ycf12, peripheral proteins PsbO, CyanoQ (PsbQ), PsbU, PsbV and a large number of cofactors. It forms dimeric complexes.

The protein localises to the cellular thylakoid membrane. Functionally, loosely associated component of the core of photosystem II (PSII), it is not always seen in crystals. PSII is a light-driven water plastoquinone oxidoreductase, using light energy to abstract electrons from H(2)O, generating a proton gradient subsequently used for ATP formation. In Gloeothece citriformis (strain PCC 7424) (Cyanothece sp. (strain PCC 7424)), this protein is Photosystem II reaction center protein Y.